The sequence spans 114 residues: Putative ANKRD40 C-terminal-like protein (114 aa).

This chain is Putative ANKRD40 C-terminal-like protein, found in Homo sapiens (Human).